The following is a 125-amino-acid chain: Snaclec VP12 subunit B (125 aa).

3 disulfides stabilise this stretch: Cys4/Cys15, Cys32/Cys121, and Cys98/Cys113. In terms of domain architecture, C-type lectin spans 11–122 (FEKYCYKVFQ…CNDPRYFVCK (112 aa)).

This sequence belongs to the snaclec family. In terms of assembly, heterodimer of subunits alpha and beta; disulfide-linked. As to expression, expressed by the venom gland.

The protein resides in the secreted. Inhibits integrin alpha-2/beta-1- (ITGA2/ITGB1) dependent melanoma metastasis. The polypeptide is Snaclec VP12 subunit B (Daboia palaestinae (Palestine viper)).